The following is a 365-amino-acid chain: Eukaryotic translation initiation factor 3 subunit H (365 aa).

An MPN domain is found at 11-160; sequence VKVEALVVMK…LRAFRLSPKF (150 aa).

This sequence belongs to the eIF-3 subunit H family. Component of the eukaryotic translation initiation factor 3 (eIF-3) complex.

It localises to the cytoplasm. Functionally, component of the eukaryotic translation initiation factor 3 (eIF-3) complex, which is involved in protein synthesis of a specialized repertoire of mRNAs and, together with other initiation factors, stimulates binding of mRNA and methionyl-tRNAi to the 40S ribosome. The eIF-3 complex specifically targets and initiates translation of a subset of mRNAs involved in cell proliferation. In Aspergillus fumigatus (strain CBS 144.89 / FGSC A1163 / CEA10) (Neosartorya fumigata), this protein is Eukaryotic translation initiation factor 3 subunit H.